Here is a 271-residue protein sequence, read N- to C-terminus: MSQPQLTQEALAREAALPENLWIQCPYCKQGSYRESLGNAQVCPHCHYGFRITAKKRLSLIATATEEWDADLVTADPLDFPGYTEKLAAGQAATGLKDSVWTGQATIGGQSCALGIMDPKFMMGSLGTVTGERLTRLFEKATSANLAVVLFCASGGARMQEGIHSLMQMAKVSAAVKAHSNAGLLFISVLTDPTMGGVTASFAMQGDITLAEPHSLIGFAGRRVIEQTINQKLPQNFQRAETLLQSGFIDAVVQRQDQPSYLGDLLALHTA.

The CoA carboxyltransferase N-terminal domain maps to L21 to A271. Residues C25, C28, C43, and C46 each contribute to the Zn(2+) site. Residues C25–C46 form a C4-type zinc finger.

It belongs to the AccD/PCCB family. In terms of assembly, acetyl-CoA carboxylase is a heterohexamer composed of biotin carboxyl carrier protein (AccB), biotin carboxylase (AccC) and two subunits each of ACCase subunit alpha (AccA) and ACCase subunit beta (AccD). Zn(2+) is required as a cofactor.

The protein resides in the cytoplasm. The enzyme catalyses N(6)-carboxybiotinyl-L-lysyl-[protein] + acetyl-CoA = N(6)-biotinyl-L-lysyl-[protein] + malonyl-CoA. Its pathway is lipid metabolism; malonyl-CoA biosynthesis; malonyl-CoA from acetyl-CoA: step 1/1. Its function is as follows. Component of the acetyl coenzyme A carboxylase (ACC) complex. Biotin carboxylase (BC) catalyzes the carboxylation of biotin on its carrier protein (BCCP) and then the CO(2) group is transferred by the transcarboxylase to acetyl-CoA to form malonyl-CoA. This chain is Acetyl-coenzyme A carboxylase carboxyl transferase subunit beta, found in Lacticaseibacillus casei (strain BL23) (Lactobacillus casei).